A 181-amino-acid chain; its full sequence is Protein Syd (181 aa).

Belongs to the Syd family.

The protein resides in the cell inner membrane. Functionally, interacts with the SecY protein in vivo. May bind preferentially to an uncomplexed state of SecY, thus functioning either as a chelating agent for excess SecY in the cell or as a regulatory factor that negatively controls the translocase function. In Klebsiella pneumoniae (strain 342), this protein is Protein Syd.